The following is a 345-amino-acid chain: D-fructose 1,6-bisphosphatase class 2/sedoheptulose 1,7-bisphosphatase (345 aa).

Residues D33, E57, D97, and E100 each contribute to the Mn(2+) site. Substrate-binding positions include 100 to 102 (EGT), Y131, 176 to 178 (RPR), and 198 to 200 (DGD). Mn(2+) is bound at residue E225.

The protein belongs to the FBPase class 2 family. In terms of assembly, homotetramer. It depends on Mn(2+) as a cofactor.

The enzyme catalyses beta-D-fructose 1,6-bisphosphate + H2O = beta-D-fructose 6-phosphate + phosphate. The catalysed reaction is D-sedoheptulose 1,7-bisphosphate + H2O = D-sedoheptulose 7-phosphate + phosphate. It participates in carbohydrate biosynthesis; Calvin cycle. Functionally, catalyzes the hydrolysis of fructose 1,6-bisphosphate (Fru 1,6-P2) and sedoheptulose 1,7-bisphosphate (Sed 1,7-P2) to fructose 6-phosphate and sedoheptulose 7-phosphate, respectively. The chain is D-fructose 1,6-bisphosphatase class 2/sedoheptulose 1,7-bisphosphatase from Crocosphaera subtropica (strain ATCC 51142 / BH68) (Cyanothece sp. (strain ATCC 51142)).